Consider the following 306-residue polypeptide: ORF-B protein (306 aa).

The next 3 helical transmembrane spans lie at 92-112, 120-140, and 161-181; these read MIQW…FPFI, LTHL…VFGW, and VIEW…IVVS.

Interacts with host RACK1.

Its subcellular location is the host cytoplasm. It is found in the host cell membrane. This Sander vitreus (Walleye) protein is ORF-B protein.